We begin with the raw amino-acid sequence, 217 residues long: Large ribosomal subunit protein uL1 (217 aa).

It belongs to the universal ribosomal protein uL1 family. As to quaternary structure, component of the large ribosomal subunit.

The protein resides in the cytoplasm. Component of the large ribosomal subunit. The ribosome is a large ribonucleoprotein complex responsible for the synthesis of proteins in the cell. The protein is Large ribosomal subunit protein uL1 (rpl10a) of Xenopus laevis (African clawed frog).